The chain runs to 443 residues: MSVSRIYIANVSYSSSEEDLREFLKDFNFSSVLIPCHTVRRFRRNEARSFGIAYVDFTSSEEAVRAVEELNGKEFGGRVLRVRTHNPYQPPKPIKERFGTKLQQLKKFAKYEDTAASGERAPTDAQDHPDQPQEGHMSPDVVLVNGTTDEEQQLANVINDPVTNADAPGTEQNISKEKAISEDTVYCAFLPKETTDNDLRNYFTDYGSREIWIFRTKNVSNSRFRFRNRNHTAALVTLSTELPLNKVIEELLGKKLLGTKISIKPAYIYKINEVKKIAEQSHMLATEYRHQNGNSDVVIGTPNEALLNSTQVASQIIGSNPEIEVSNQNSSSIANVAETNGNVGDTPITKLDSRNNIKIVNIGNPQDKTKKNQPNDNKELNKIDLETKNDSLHLESICDPIISIDMSGMTKQSVGSNKKKNKKKKSARGKEVRKLSVSNTTTQ.

In terms of domain architecture, RRM 1 spans 4–87 (SRIYIANVSY…RVLRVRTHNP (84 aa)). Residues 112–140 (EDTAASGERAPTDAQDHPDQPQEGHMSPD) form a disordered region. Over residues 121 to 133 (APTDAQDHPDQPQ) the composition is skewed to basic and acidic residues. One can recognise an RRM 2 domain in the interval 183-268 (DTVYCAFLPK…TKISIKPAYI (86 aa)). The disordered stretch occupies residues 408 to 443 (GMTKQSVGSNKKKNKKKKSARGKEVRKLSVSNTTTQ). Positions 417-427 (NKKKNKKKKSA) are enriched in basic residues.

The protein belongs to the RRT5 family.

May be involved in the modulation of rDNA transcription. The protein is Regulator of rDNA transcription protein 5 (RRT5) of Candida glabrata (strain ATCC 2001 / BCRC 20586 / JCM 3761 / NBRC 0622 / NRRL Y-65 / CBS 138) (Yeast).